Reading from the N-terminus, the 320-residue chain is Polyadenylate-binding protein-interacting protein 13 (320 aa).

Residues 1–44 (MAVAENVGVKVDSSNNQNIDNNTTSLVETKPSCSDDQTPKSKSS) are disordered. Residues 12–44 (DSSNNQNIDNNTTSLVETKPSCSDDQTPKSKSS) are compositionally biased toward polar residues. Residues 65 to 75 (HLNPMAKEFVP) carry the PAM2-like motif. 2 RRM domains span residues 137–212 (RTVY…MSKT) and 234–310 (KTVY…PSKT).

The protein is Polyadenylate-binding protein-interacting protein 13 (CID13) of Arabidopsis thaliana (Mouse-ear cress).